A 174-amino-acid polypeptide reads, in one-letter code: MLRGFAPTGVHVVALASGVFLSGAMFSVSAIMIPTLLDTNKEPAGLTTQWARLYHYGSVLMPSMSVAIAAVYGFASTQYRQSPQGMRCLAAGALTLAIAPYTWLAMIPTNNALFAMAASAPGFAGMQDANEKARDLVMKWVVLHSIRSILPLAGAIMGFTGISSGQEGVVGSAN.

Helical transmembrane passes span 13 to 33 (VALASGVFLSGAMFSVSAIMI), 56 to 76 (YGSVLMPSMSVAIAAVYGFAS), 88 to 108 (CLAAGALTLAIAPYTWLAMIP), and 140 to 160 (WVVLHSIRSILPLAGAIMGFT).

Belongs to the anthrone oxygenase family.

The protein localises to the membrane. It catalyses the reaction emodin anthrone + O2 = emodin + H2O + H(+). Functionally, anthrone oxygenase; part of the ergochrome gene cluster responsible for the typical purple-black color of the ergot sclerotia. The ergochrome gene cluster produces several ergot pigments including the yellow ergochrome secalonic acid and its derivatives, as well as the red anthraquinones endocrocin and clavorubin. The pathway begins with the synthesis of atrochrysone thioester by the polyketide synthase (PKS) CPUR_05437. The atrochrysone carboxyl ACP thioesterase CPUR_05436 then breaks the thioester bond and releases the atrochrysone carboxylic acid from CPUR_05437. The decarboxylase CPUR_05434 then catalyzes the concerted decarboxylation-elimination required to convert atochrysone carboxylic acid into emodin anthrone, which is further oxidized to emodin by the anthrone oxygenase CPUR_05435. Emodin is further modified to yield monodictyphenone via several steps involving CPUR_05427, CPUR_05428, CPUR_05429 and CPUR_05430. The short chain dehydrogenase/reductase CPUR_05418 then catalyzes the C-5 ketoreduction to give the xanthone skeleton of the monomeric units. Ergochromes formation requires further dimerization steps of different xanthone units, probably catalyzed by the cytochrome P450 monooxygenase CPUR_05419. CPUR_05425, CPUR_05426 and CPUR_05431 are unique to Claviceps, thus it is likely that they are involved in further modification of xanthone units or in their dimerization. The yellow ergochromes and the red anthraquinone pigments endocrocin and clavorubin are products from the same PKS derived precursors and the latter are likely shunt products in the pathway of xanthone biosynthesis. It is proposed that atrochrysone carboxylic acid released from the PKS CPUR_05437 can also be converted to endocrocin anthrone which is further oxidized into endocrocin by CPUR_05435. Endocrocin could be then modified to clavorubin, possibly by CPUR_05423 and CPUR_05431. Clavorubin is the principal anthraquinone metabolite produced by the cluster with a much higher yield compared to endocrocin. The polypeptide is Anthrone oxygenase CPUR_05435 (Claviceps purpurea (strain 20.1) (Ergot fungus)).